A 493-amino-acid chain; its full sequence is 3-octaprenyl-4-hydroxybenzoate carboxy-lyase (493 aa).

Residue Asn-172 coordinates Mn(2+). Prenylated FMN-binding positions include 175–177 (IYR), 189–191 (RWL), and 194–195 (RG). Mn(2+) is bound at residue Glu-238. Asp-287 serves as the catalytic Proton donor.

Belongs to the UbiD family. Homohexamer. The cofactor is prenylated FMN. Mn(2+) is required as a cofactor.

It is found in the cell membrane. The catalysed reaction is a 4-hydroxy-3-(all-trans-polyprenyl)benzoate + H(+) = a 2-(all-trans-polyprenyl)phenol + CO2. Its pathway is cofactor biosynthesis; ubiquinone biosynthesis. In terms of biological role, catalyzes the decarboxylation of 3-octaprenyl-4-hydroxy benzoate to 2-octaprenylphenol, an intermediate step in ubiquinone biosynthesis. This chain is 3-octaprenyl-4-hydroxybenzoate carboxy-lyase, found in Shewanella piezotolerans (strain WP3 / JCM 13877).